A 741-amino-acid polypeptide reads, in one-letter code: Protein lin-54 homolog (741 aa).

The 114-residue stretch at 513-626 folds into the CRC domain; sequence PRKPCNCTKS…KCIGCKNFEE (114 aa). The DNA-binding stretch occupies residues 515-528; it reads KPCNCTKSLCLKLY. Residues Cys517, Cys519, Cys524, Cys529, Cys531, Cys538, Cys541, Cys543, and Cys546 each contribute to the Zn(2+) site. The tract at residues 575–588 is linker; sequence IGKGKEGESDRRHS. 9 residues coordinate Zn(2+): Cys591, Cys593, Cys598, Cys603, Cys605, Cys612, Cys616, Cys618, and Cys621. Residues 591-604 form a DNA-binding region; sequence CNCKRSGCLKNYCE.

The protein belongs to the lin-54 family. Component of the DREAM complex.

It localises to the nucleus. Component of the DREAM complex, a multiprotein complex that can both act as a transcription activator or repressor depending on the context. Specifically recognizes the consensus motif 5'-TTYRAA-3' in target DNA. This is Protein lin-54 homolog (lin54) from Xenopus tropicalis (Western clawed frog).